We begin with the raw amino-acid sequence, 255 residues long: Postacrosomal sheath WW domain-binding protein (255 aa).

One can recognise a GRAM domain in the interval 15 to 87 (LIPNGESLLK…DLITNLTVEQ (73 aa)). Repeat copies occupy residues 139 to 145 (YGAPPAG), 146 to 152 (YGAPPAG), 153 to 159 (YGAPPPG), 160 to 166 (YGAPPAG), 167 to 173 (YGAPPPG), 174 to 180 (YGAPPAG), and 202 to 208 (YGAPPLG). Residues 139–208 (YGAPPAGYGA…PAGYGAPPLG (70 aa)) form a 6 X 7 AA tandem repeat of Y-G-X-P-P-X-G region. The PPxY motif motif lies at 171 to 174 (PPGY). 2 disordered regions span residues 180–199 (GYGA…RASP) and 204–255 (APPL…ASSS).

In terms of biological role, may play a role in meiotic resumption and pronuclear formation, mediated by a WW domain-signaling pathway during fertilization. The chain is Postacrosomal sheath WW domain-binding protein (WBP2NL) from Macaca fascicularis (Crab-eating macaque).